A 225-amino-acid chain; its full sequence is Probable polyketide biosynthesis zinc-dependent hydrolase PksB (225 aa).

7 residues coordinate Zn(2+): H62, H64, D66, H67, H123, D140, and H181.

It belongs to the metallo-beta-lactamase superfamily. The cofactor is Zn(2+).

It localises to the cytoplasm. Its pathway is antibiotic biosynthesis; bacillaene biosynthesis. Probably involved in some intermediate steps for the synthesis of the antibiotic polyketide bacillaene which is involved in secondary metabolism. This chain is Probable polyketide biosynthesis zinc-dependent hydrolase PksB (pksB), found in Bacillus subtilis (strain 168).